Reading from the N-terminus, the 619-residue chain is Chaperone protein HscA homolog (619 aa).

It belongs to the heat shock protein 70 family.

Functionally, chaperone involved in the maturation of iron-sulfur cluster-containing proteins. Has a low intrinsic ATPase activity which is markedly stimulated by HscB. This is Chaperone protein HscA homolog from Shewanella frigidimarina (strain NCIMB 400).